The sequence spans 332 residues: Glycerol-3-phosphate dehydrogenase [NAD(P)+] (332 aa).

Positions 11, 12, 32, 33, and 106 each coordinate NADPH. Residues Lys-106 and Gly-136 each contribute to the sn-glycerol 3-phosphate site. Ala-140 serves as a coordination point for NADPH. Sn-glycerol 3-phosphate is bound by residues Lys-191, Asp-244, Ser-254, Arg-255, and Asn-256. The active-site Proton acceptor is the Lys-191. Arg-255 lines the NADPH pocket. Positions 280 and 282 each coordinate NADPH.

It belongs to the NAD-dependent glycerol-3-phosphate dehydrogenase family.

The protein localises to the cytoplasm. It catalyses the reaction sn-glycerol 3-phosphate + NAD(+) = dihydroxyacetone phosphate + NADH + H(+). The enzyme catalyses sn-glycerol 3-phosphate + NADP(+) = dihydroxyacetone phosphate + NADPH + H(+). The protein operates within membrane lipid metabolism; glycerophospholipid metabolism. In terms of biological role, catalyzes the reduction of the glycolytic intermediate dihydroxyacetone phosphate (DHAP) to sn-glycerol 3-phosphate (G3P), the key precursor for phospholipid synthesis. The sequence is that of Glycerol-3-phosphate dehydrogenase [NAD(P)+] from Corynebacterium aurimucosum (strain ATCC 700975 / DSM 44827 / CIP 107346 / CN-1) (Corynebacterium nigricans).